Reading from the N-terminus, the 416-residue chain is Trehalose synthase (416 aa).

It belongs to the glycosyltransferase group 1 family. Glycosyltransferase 4 subfamily. In terms of assembly, homodimer. Requires Mg(2+) as cofactor.

It catalyses the reaction an NDP-alpha-D-glucose + D-glucose = alpha,alpha-trehalose + a ribonucleoside 5'-diphosphate + H(+). Its activity is regulated as follows. Inhibited by 20 mM Fe(3+) and Mn(2+). Partially inhibited by Zn(2+) and Ni(2+). Activity is slightly enhanced by 2 mM Fe (3+), Mn (2+), Ca(2+) or Li(+) and by 20 mM Mg(2+), Ca(2+) or Li(+). Functionally, synthesizes trehalose from ADP-glucose and glucose. The reaction is reversible, the equilibrium strongly favors trehalose synthesis. The protein is Trehalose synthase of Rubrobacter xylanophilus (strain DSM 9941 / JCM 11954 / NBRC 16129 / PRD-1).